The primary structure comprises 495 residues: AAA-ATPase At2g18193 (495 aa).

Residues 7–28 form a helical membrane-spanning segment; the sequence is FSFSPSSLFSAYASLTGFLMLF. Position 250 to 257 (250 to 257) interacts with ATP; the sequence is GPPGTGKS. A disordered region spans residues 451–495; sequence EVSICKATDDDEKQNGSLGCVKKKKKGGKQKGKGKGKGKAKTYLI. Over residues 471–495 the composition is skewed to basic residues; it reads VKKKKKGGKQKGKGKGKGKAKTYLI.

It belongs to the AAA ATPase family. BCS1 subfamily. It depends on Mg(2+) as a cofactor.

It is found in the membrane. The catalysed reaction is ATP + H2O = ADP + phosphate + H(+). This Arabidopsis thaliana (Mouse-ear cress) protein is AAA-ATPase At2g18193.